Here is a 529-residue protein sequence, read N- to C-terminus: Bifunctional purine biosynthesis protein PurH (529 aa).

One can recognise an MGS-like domain in the interval 1–148 (MQQRRPVRRA…KNHKDVAIVV (148 aa)). Lysine 287 is subject to N6-acetyllysine.

It belongs to the PurH family.

It catalyses the reaction (6R)-10-formyltetrahydrofolate + 5-amino-1-(5-phospho-beta-D-ribosyl)imidazole-4-carboxamide = 5-formamido-1-(5-phospho-D-ribosyl)imidazole-4-carboxamide + (6S)-5,6,7,8-tetrahydrofolate. The catalysed reaction is IMP + H2O = 5-formamido-1-(5-phospho-D-ribosyl)imidazole-4-carboxamide. Its pathway is purine metabolism; IMP biosynthesis via de novo pathway; 5-formamido-1-(5-phospho-D-ribosyl)imidazole-4-carboxamide from 5-amino-1-(5-phospho-D-ribosyl)imidazole-4-carboxamide (10-formyl THF route): step 1/1. It participates in purine metabolism; IMP biosynthesis via de novo pathway; IMP from 5-formamido-1-(5-phospho-D-ribosyl)imidazole-4-carboxamide: step 1/1. The protein is Bifunctional purine biosynthesis protein PurH of Escherichia coli (strain SMS-3-5 / SECEC).